The following is a 527-amino-acid chain: Berberine bridge enzyme-like 8 (527 aa).

Positions 1–20 (MKYALILVLFFVVFIWQSSS) are cleaved as a signal peptide. Cysteine 31 and cysteine 93 form a disulfide bridge. 2 N-linked (GlcNAc...) asparagine glycosylation sites follow: asparagine 51 and asparagine 68. In terms of domain architecture, FAD-binding PCMH-type spans 71–247 (STPKPFLIIA…LAYKINLVEV (177 aa)). Residues 108-172 (HDYDGLSYVT…KTLAYPAGIC (65 aa)) constitute a cross-link (6-(S-cysteinyl)-8alpha-(pros-histidyl)-FAD (His-Cys)). Residues asparagine 250, asparagine 263, and asparagine 292 are each glycosylated (N-linked (GlcNAc...) asparagine).

It belongs to the oxygen-dependent FAD-linked oxidoreductase family. FAD is required as a cofactor. In terms of processing, the FAD cofactor is bound via a bicovalent 6-S-cysteinyl, 8alpha-N1-histidyl FAD linkage.

It is found in the secreted. It localises to the cell wall. The protein is Berberine bridge enzyme-like 8 of Arabidopsis thaliana (Mouse-ear cress).